Reading from the N-terminus, the 519-residue chain is Mannuronan C5-epimerase (519 aa).

Residues 1 to 25 form the signal peptide; that stretch reads MNLHPHLRHSLLASALLLASGLATA. 6 PbH1 repeats span residues 219-246, 281-303, 305-328, 330-352, 354-376, and 377-399; these read GTET…SISQ, TQDF…DPHD, SHRL…IVSR, VNDS…VIDR, SVNN…TLYE, and SGDN…RVRN. His-302 acts as the Proton acceptor in catalysis.

Belongs to the D-mannuronate C5-epimerase family.

It localises to the periplasm. It catalyses the reaction [(1-&gt;4)-beta-D-mannuronosyl](n) = [alginate](n). The protein operates within glycan biosynthesis; alginate biosynthesis. In terms of biological role, catalyzes the epimerization of beta-D-mannuronate to alpha-L-guluronate during the synthesis of the linear polysaccharide alginate. In addition, is part of a periplasmic protein complex that protects alginate from degradation by AlgL by channeling the newly formed alginate polymer through a scaffold that transfers the alginate polymer through the periplasmic space to the outer membrane secretin AlgE. This is Mannuronan C5-epimerase (algG) from Pseudomonas putida (strain ATCC 47054 / DSM 6125 / CFBP 8728 / NCIMB 11950 / KT2440).